The following is a 127-amino-acid chain: uncharacterized protein (127 aa).

Residues 1–16 (MIKKIIFGIAILLSLS) form the signal peptide. Residue cysteine 17 is the site of N-palmitoyl cysteine attachment. Cysteine 17 carries S-diacylglycerol cysteine lipidation. The stretch at 56–101 (EVRKEIQEYRVEIVDINKKKRELYNSLSKEAQNFLAEQQKYKQKLS) forms a coiled coil. The tract at residues 101 to 127 (SISKLPTEDDSPNNTANSKDNKDTDTK) is disordered.

It is found in the cell membrane. This is an uncharacterized protein from Rickettsia felis (strain ATCC VR-1525 / URRWXCal2) (Rickettsia azadi).